The primary structure comprises 282 residues: Purine nucleoside phosphorylase (282 aa).

Phosphate is bound by residues S46, H78, and 103–105; that span reads RTH. Residue E204 is part of the active site. E204 is a binding site for a purine D-ribonucleoside. S223 serves as a coordination point for phosphate. Position 246 (N246) interacts with a purine D-ribonucleoside.

Belongs to the PNP/MTAP phosphorylase family. Homotrimer.

It carries out the reaction a purine 2'-deoxy-D-ribonucleoside + phosphate = a purine nucleobase + 2-deoxy-alpha-D-ribose 1-phosphate. It functions in the pathway purine metabolism; purine nucleoside salvage. Functionally, the purine nucleoside phosphorylases catalyze the phosphorolytic breakdown of the N-glycosidic bond in the beta-(deoxy)ribonucleoside molecules, with the formation of the corresponding free purine bases and pentose-1-phosphate. Cleaves guanosine, inosine, 2'-deoxyguanosine and 2'-deoxyinosine. This chain is Purine nucleoside phosphorylase (punA), found in Cellulomonas sp.